A 174-amino-acid polypeptide reads, in one-letter code: RNA pyrophosphohydrolase (174 aa).

Positions 6–145 constitute a Nudix hydrolase domain; the sequence is GYRPNVGMII…KRRVYWQALQ (140 aa). Residues 38–59 carry the Nudix box motif; the sequence is GGIDYAETPEQAMFRELEEEVG.

This sequence belongs to the Nudix hydrolase family. RppH subfamily. The cofactor is a divalent metal cation.

Accelerates the degradation of transcripts by removing pyrophosphate from the 5'-end of triphosphorylated RNA, leading to a more labile monophosphorylated state that can stimulate subsequent ribonuclease cleavage. In Acidithiobacillus ferrooxidans (strain ATCC 53993 / BNL-5-31) (Leptospirillum ferrooxidans (ATCC 53993)), this protein is RNA pyrophosphohydrolase.